Consider the following 323-residue polypeptide: ATP synthase gamma chain (323 aa).

This sequence belongs to the ATPase gamma chain family. F-type ATPases have 2 components, CF(1) - the catalytic core - and CF(0) - the membrane proton channel. CF(1) has five subunits: alpha(3), beta(3), gamma(1), delta(1), epsilon(1). CF(0) has three main subunits: a, b and c.

The protein localises to the cell inner membrane. In terms of biological role, produces ATP from ADP in the presence of a proton gradient across the membrane. The gamma chain is believed to be important in regulating ATPase activity and the flow of protons through the CF(0) complex. The sequence is that of ATP synthase gamma chain from Rickettsia africae (strain ESF-5).